The primary structure comprises 403 residues: Phosphoglycerate kinase (403 aa).

Residues 24 to 26 (DLN), R39, 62 to 65 (HLGR), R121, and R161 each bind substrate. ATP is bound by residues K211, G299, E330, and 359-362 (GGDS).

It belongs to the phosphoglycerate kinase family. In terms of assembly, monomer.

Its subcellular location is the cytoplasm. It carries out the reaction (2R)-3-phosphoglycerate + ATP = (2R)-3-phospho-glyceroyl phosphate + ADP. Its pathway is carbohydrate degradation; glycolysis; pyruvate from D-glyceraldehyde 3-phosphate: step 2/5. This chain is Phosphoglycerate kinase, found in Rhodococcus jostii (strain RHA1).